Here is a 41-residue protein sequence, read N- to C-terminus: Large ribosomal subunit protein bL36 (41 aa).

It belongs to the bacterial ribosomal protein bL36 family.

In Stenotrophomonas maltophilia (strain R551-3), this protein is Large ribosomal subunit protein bL36.